The sequence spans 329 residues: DNA-directed RNA polymerase subunit alpha (329 aa).

The segment at 1–235 (MQGSVTEFLK…EQLEAFVDLR (235 aa)) is alpha N-terminal domain (alpha-NTD). An alpha C-terminal domain (alpha-CTD) region spans residues 249–329 (FDPILLRPVD…DWPPASIADE (81 aa)).

This sequence belongs to the RNA polymerase alpha chain family. In terms of assembly, homodimer. The RNAP catalytic core consists of 2 alpha, 1 beta, 1 beta' and 1 omega subunit. When a sigma factor is associated with the core the holoenzyme is formed, which can initiate transcription.

The catalysed reaction is RNA(n) + a ribonucleoside 5'-triphosphate = RNA(n+1) + diphosphate. Its function is as follows. DNA-dependent RNA polymerase catalyzes the transcription of DNA into RNA using the four ribonucleoside triphosphates as substrates. The sequence is that of DNA-directed RNA polymerase subunit alpha from Salmonella choleraesuis (strain SC-B67).